A 241-amino-acid polypeptide reads, in one-letter code: Uridylate kinase (241 aa).

ATP-binding positions include 10-13, glycine 53, and arginine 57; that span reads KLSG. Residues aspartate 72 and 133 to 140 contribute to the UMP site; that span reads AGSPYFST. ATP contacts are provided by asparagine 161, tyrosine 167, and aspartate 170.

It belongs to the UMP kinase family. Homohexamer.

The protein resides in the cytoplasm. It carries out the reaction UMP + ATP = UDP + ADP. It participates in pyrimidine metabolism; CTP biosynthesis via de novo pathway; UDP from UMP (UMPK route): step 1/1. Inhibited by UTP. In terms of biological role, catalyzes the reversible phosphorylation of UMP to UDP. This is Uridylate kinase from Onion yellows phytoplasma (strain OY-M).